A 404-amino-acid polypeptide reads, in one-letter code: AT-hook motif nuclear-localized protein 6 (404 aa).

The segment at 40-112 (TTVVTPLPPP…TPISSSIPLS (73 aa)) is disordered. The span at 45–55 (PLPPPPAPSSA) shows a compositional bias: pro residues. Positions 56–70 (PVPTTVTPGSATAST) are enriched in low complexity. The short motif at 76–84 (KKKRGRPRK) is the Bipartite nuclear localization signal element. Positions 76-88 (KKKRGRPRKYAPD) form a DNA-binding region, a.T hook. The segment covering 98 to 112 (PTLSPTPISSSIPLS) has biased composition (low complexity). One can recognise a PPC domain in the interval 157 to 299 (GANFTTHQFT…RVMEAFAPPQ (143 aa)). The interval 365 to 404 (AYHGYGNMNTGTTHKEEHEDEDGGDDDDDSGDTRSQSHSG) is disordered. Over residues 382–394 (HEDEDGGDDDDDS) the composition is skewed to acidic residues.

Its subcellular location is the nucleus. Its function is as follows. Transcription factor that specifically binds AT-rich DNA sequences related to the nuclear matrix attachment regions (MARs). The polypeptide is AT-hook motif nuclear-localized protein 6 (Arabidopsis thaliana (Mouse-ear cress)).